A 474-amino-acid chain; its full sequence is Serine--tRNA ligase (474 aa).

L-serine is bound at residue 278–280 (TAE). 309–311 (RSE) lines the ATP pocket. Position 332 (Glu332) interacts with L-serine. 396-399 (EISS) contacts ATP. Ser432 provides a ligand contact to L-serine.

It belongs to the class-II aminoacyl-tRNA synthetase family. Type-1 seryl-tRNA synthetase subfamily. As to quaternary structure, homodimer. The tRNA molecule binds across the dimer.

The protein localises to the cytoplasm. It catalyses the reaction tRNA(Ser) + L-serine + ATP = L-seryl-tRNA(Ser) + AMP + diphosphate + H(+). The catalysed reaction is tRNA(Sec) + L-serine + ATP = L-seryl-tRNA(Sec) + AMP + diphosphate + H(+). It functions in the pathway aminoacyl-tRNA biosynthesis; selenocysteinyl-tRNA(Sec) biosynthesis; L-seryl-tRNA(Sec) from L-serine and tRNA(Sec): step 1/1. Functionally, catalyzes the attachment of serine to tRNA(Ser). Is also able to aminoacylate tRNA(Sec) with serine, to form the misacylated tRNA L-seryl-tRNA(Sec), which will be further converted into selenocysteinyl-tRNA(Sec). This chain is Serine--tRNA ligase, found in Caulobacter sp. (strain K31).